The primary structure comprises 190 residues: Probable nicotinate-nucleotide adenylyltransferase (190 aa).

The protein belongs to the NadD family.

The enzyme catalyses nicotinate beta-D-ribonucleotide + ATP + H(+) = deamido-NAD(+) + diphosphate. Its pathway is cofactor biosynthesis; NAD(+) biosynthesis; deamido-NAD(+) from nicotinate D-ribonucleotide: step 1/1. Its function is as follows. Catalyzes the reversible adenylation of nicotinate mononucleotide (NaMN) to nicotinic acid adenine dinucleotide (NaAD). This is Probable nicotinate-nucleotide adenylyltransferase from Frankia casuarinae (strain DSM 45818 / CECT 9043 / HFP020203 / CcI3).